Reading from the N-terminus, the 125-residue chain is Prefoldin subunit beta (125 aa).

Belongs to the prefoldin subunit beta family. As to quaternary structure, heterohexamer of two alpha and four beta subunits.

It localises to the cytoplasm. Molecular chaperone capable of stabilizing a range of proteins. Seems to fulfill an ATP-independent, HSP70-like function in archaeal de novo protein folding. The protein is Prefoldin subunit beta of Halobacterium salinarum (strain ATCC 29341 / DSM 671 / R1).